Reading from the N-terminus, the 74-residue chain is Translation initiation factor IF-1, chloroplastic (74 aa).

Positions 1 to 72 (MEKQNIIEME…TKGRITYRLR (72 aa)) constitute an S1-like domain.

This sequence belongs to the IF-1 family. Component of the 30S ribosomal translation pre-initiation complex which assembles on the 30S ribosome in the order IF-2 and IF-3, IF-1 and N-formylmethionyl-tRNA(fMet); mRNA recruitment can occur at any time during PIC assembly.

The protein localises to the plastid. It localises to the chloroplast. Its function is as follows. One of the essential components for the initiation of protein synthesis. Stabilizes the binding of IF-2 and IF-3 on the 30S subunit to which N-formylmethionyl-tRNA(fMet) subsequently binds. Helps modulate mRNA selection, yielding the 30S pre-initiation complex (PIC). Upon addition of the 50S ribosomal subunit IF-1, IF-2 and IF-3 are released leaving the mature 70S translation initiation complex. This Chlorokybus atmophyticus (Soil alga) protein is Translation initiation factor IF-1, chloroplastic.